We begin with the raw amino-acid sequence, 105 residues long: Small cysteine and glycine repeat-containing protein 10 (105 aa).

Residues 4–41 (CGCGGCGGRCSGGCGGGCGGGCGGGCGGGCGGCGGGCG) are 10 X 2 AA repeats of CG.

Belongs to the KRTAP type 28 family.

Its function is as follows. In the hair cortex, hair keratin intermediate filaments are embedded in an interfilamentous matrix, consisting of hair keratin-associated proteins (KRTAP), which are essential for the formation of a rigid and resistant hair shaft through their extensive disulfide bond cross-linking with abundant cysteine residues of hair keratins. The matrix proteins include the high-sulfur and high-glycine-tyrosine keratins. This Homo sapiens (Human) protein is Small cysteine and glycine repeat-containing protein 10.